The primary structure comprises 508 residues: MAGNQQLRVLHALDIARTQLYHFIAIVIAGMGFFTDAYDLFSISLVADLLGHVYYHGELPRNIHAAVTGIALCGTVPGQLVFGWLGDKMGRKRVYGITLLLMVVSSLASGLSFSKHEGMNIIAVLCFFRFWLGVSIGGDYPLSATIMSEYANKRTRGAFIAAVFAMQGFGNLAAGIIGMIVSAAFKHSSASKIDYAWRIILMFGAIPAALTYHWRMKMPETARYTALISKNAKKAAKDMSAVLNVNITPDDEVINELARQDEYGLFSFEFLHRHGLHLLGTTVCWFVLDVTFYSLNIFMKNIFTEVGLLPRLDSEYHHTLQRMITMTAVHTFISLCGALPGYFFTVAFVDRIGRVKIQLIGFTMMTVFMLCLAIPYDQWLRHKNKYGFAVMYGLTFFFANFGPNTTTFIIPAEIFPARLRSTCHGISGAVGKIGAIVGVFGFLYTEYHIRIFLFVLIGCNLVGFIFTLLLPESKGKSLEDLTGEIEEFQEEDEGSEVALSRPIHTVPL.

Residues 1–22 (MAGNQQLRVLHALDIARTQLYH) lie on the Cytoplasmic side of the membrane. Residues 23–43 (FIAIVIAGMGFFTDAYDLFSI) traverse the membrane as a helical segment. At 44-64 (SLVADLLGHVYYHGELPRNIH) the chain is on the extracellular side. A helical transmembrane segment spans residues 65–85 (AAVTGIALCGTVPGQLVFGWL). Over 86–93 (GDKMGRKR) the chain is Cytoplasmic. A helical membrane pass occupies residues 94 to 114 (VYGITLLLMVVSSLASGLSFS). Topologically, residues 115-117 (KHE) are extracellular. A helical transmembrane segment spans residues 118-138 (GMNIIAVLCFFRFWLGVSIGG). Over 139–159 (DYPLSATIMSEYANKRTRGAF) the chain is Cytoplasmic. Residues 160-180 (IAAVFAMQGFGNLAAGIIGMI) form a helical membrane-spanning segment. The Extracellular segment spans residues 181–192 (VSAAFKHSSASK). A helical transmembrane segment spans residues 193–213 (IDYAWRIILMFGAIPAALTYH). Over 214-277 (WRMKMPETAR…FEFLHRHGLH (64 aa)) the chain is Cytoplasmic. A helical transmembrane segment spans residues 278–298 (LLGTTVCWFVLDVTFYSLNIF). Over 299–328 (MKNIFTEVGLLPRLDSEYHHTLQRMITMTA) the chain is Extracellular. Residues 329-349 (VHTFISLCGALPGYFFTVAFV) traverse the membrane as a helical segment. Over 350-354 (DRIGR) the chain is Cytoplasmic. Residues 355–375 (VKIQLIGFTMMTVFMLCLAIP) form a helical membrane-spanning segment. Residues 376 to 389 (YDQWLRHKNKYGFA) are Extracellular-facing. The helical transmembrane segment at 390–410 (VMYGLTFFFANFGPNTTTFII) threads the bilayer. The Cytoplasmic portion of the chain corresponds to 411 to 424 (PAEIFPARLRSTCH). Residues 425–445 (GISGAVGKIGAIVGVFGFLYT) form a helical membrane-spanning segment. Residues 446-450 (EYHIR) lie on the Extracellular side of the membrane. The chain crosses the membrane as a helical span at residues 451 to 471 (IFLFVLIGCNLVGFIFTLLLP). Over 472 to 508 (ESKGKSLEDLTGEIEEFQEEDEGSEVALSRPIHTVPL) the chain is Cytoplasmic.

Belongs to the major facilitator superfamily. Phosphate:H(+) symporter (TC 2.A.1.9) family.

It localises to the membrane. Functionally, high-affinity transporter for external inorganic phosphate. The polypeptide is Putative inorganic phosphate transporter 1-13 (PHT1-13) (Oryza sativa subsp. japonica (Rice)).